Here is a 374-residue protein sequence, read N- to C-terminus: Layilin (374 aa).

The signal sequence occupies residues 1 to 24 (MQPGPALQAVLLAVLLSEPRSSKG). Over 25 to 221 (RLLSGQLVCR…TKETFKESRE (197 aa)) the chain is Extracellular. Residues 37–177 (TRRPCYKVIY…CNMKNNFICK (141 aa)) form the C-type lectin domain. 2 disulfides stabilise this stretch: cysteine 63–cysteine 176 and cysteine 142–cysteine 168. An N-linked (GlcNAc...) asparagine glycan is attached at asparagine 109. Residues 184 to 212 (STTPSIRPGGEATEPPTPVLPEETQKEDT) form a disordered region. A helical membrane pass occupies residues 222-242 (AALNLAYILIPSIPLFLLLVV). Topologically, residues 243–374 (TSAACWVWIC…SGWVENEIYY (132 aa)) are cytoplasmic. Residues serine 279 and serine 292 each carry the phosphoserine modification. Residues 323–367 (DYDNMAVNPSESGFVTLASMESGFVTNDIYEFSPDRMGRSKESGW) are interaction with NF2. The tract at residues 330–374 (NPSESGFVTLASMESGFVTNDIYEFSPDRMGRSKESGWVENEIYY) is interaction with TLN1. 5 consecutive repeat copies span residues 333 to 337 (ESGFV), 343 to 347 (ESGFV), 349 to 352 (NDIY), 364 to 368 (ESGWV), and 370 to 373 (NEIY). The segment at 333-368 (ESGFVTLASMESGFVTNDIYEFSPDRMGRSKESGWV) is 3 X 5 AA repeats of E-S-G-X-V. The 2 X 4 AA repeats of N-X-I-Y stretch occupies residues 349 to 373 (NDIYEFSPDRMGRSKESGWVENEIY).

As to quaternary structure, interacts with NF2 and RDX. Interacts with TLN1. As to expression, widely expressed. Abundant in the ovary.

Its subcellular location is the membrane. Its function is as follows. Receptor for hyaluronate. This chain is Layilin (LAYN), found in Cricetulus griseus (Chinese hamster).